Reading from the N-terminus, the 78-residue chain is U7-lycotoxin-Ls1f (78 aa).

A signal peptide spans 1-22 (MKLIIFTGLALLLIVSLIDVEA). Positions 23–26 (QNEG) are excised as a propeptide.

The protein belongs to the neurotoxin 19 (CSTX) family. 07 (U7-Lctx) subfamily. Contains 4 disulfide bonds. In terms of tissue distribution, expressed by the venom gland.

It is found in the secreted. This chain is U7-lycotoxin-Ls1f, found in Lycosa singoriensis (Wolf spider).